A 326-amino-acid chain; its full sequence is Target of rapamycin complex subunit lst8 (326 aa).

WD repeat units lie at residues 1–37 (MNVN…CTRT), 40–80 (HQDS…PVIN), 83–122 (GVSK…LQCQ), 126–165 (QVNA…NEQL), 168–207 (EPDV…GDEV), 218–257 (AHKR…LMTE), and 268–309 (TSRG…REYS).

Belongs to the WD repeat LST8 family. As to quaternary structure, part of the mechanistic target of rapamycin complex 1 (mTORC1) which contains MTOR, MLST8 and RPTOR. Component of the mechanistic target of rapamycin complex 2 (mTORC2), consisting in two heterotretramers composed of MTOR, MLST8, RICTOR and MAPKAP1/SIN1.

It is found in the lysosome membrane. It localises to the cytoplasm. Functionally, subunit of both mTORC1 and mTORC2, which regulates cell growth and survival in response to nutrient and hormonal signals. mTORC1 is activated in response to growth factors or amino acids. In response to nutrients, mTORC1 is recruited to the lysosome membrane and promotes protein, lipid and nucleotide synthesis by phosphorylating several substrates, such as ribosomal protein S6 kinase (RPS6KB1 and RPS6KB2) and EIF4EBP1 (4E-BP1). In the same time, it inhibits catabolic pathways by phosphorylating the autophagy initiation components ULK1 and ATG13, as well as transcription factor TFEB, a master regulators of lysosomal biogenesis and autophagy. The mTORC1 complex is inhibited in response to starvation and amino acid depletion. Within mTORC1, MLST8 interacts directly with MTOR and enhances its kinase activity. In nutrient-poor conditions, stabilizes the MTOR-RPTOR interaction and favors RPTOR-mediated inhibition of MTOR activity. As part of the mTORC2 complex, transduces signals from growth factors to pathways involved in proliferation, cytoskeletal organization, lipogenesis and anabolic output. mTORC2 is also activated by growth factors, but seems to be nutrient-insensitive. In response to growth factors, mTORC2 phosphorylates and activates AGC protein kinase family members, including AKT (AKT1, AKT2 and AKT3), PKC (PRKCA, PRKCB and PRKCE) and SGK1. mTORC2 functions upstream of Rho GTPases to regulate the actin cytoskeleton, probably by activating one or more Rho-type guanine nucleotide exchange factors. mTORC2 promotes the serum-induced formation of stress-fibers or F-actin. Within mTORC2, MLST8 acts as a bridge between MAPKAP1/SIN1 and MTOR. This chain is Target of rapamycin complex subunit lst8 (mlst8), found in Danio rerio (Zebrafish).